The following is a 58-amino-acid chain: Small ribosomal subunit protein bS21 (58 aa).

The interval 35-58 (REHYESPSVRRKKKSEAARKRRYK) is disordered. Over residues 43-58 (VRRKKKSEAARKRRYK) the composition is skewed to basic residues.

It belongs to the bacterial ribosomal protein bS21 family.

This Acetivibrio thermocellus (strain ATCC 27405 / DSM 1237 / JCM 9322 / NBRC 103400 / NCIMB 10682 / NRRL B-4536 / VPI 7372) (Clostridium thermocellum) protein is Small ribosomal subunit protein bS21.